We begin with the raw amino-acid sequence, 504 residues long: ATP synthase subunit alpha (504 aa).

169–176 (GDRQTGKT) contacts ATP.

Belongs to the ATPase alpha/beta chains family. In terms of assembly, F-type ATPases have 2 components, CF(1) - the catalytic core - and CF(0) - the membrane proton channel. CF(1) has five subunits: alpha(3), beta(3), gamma(1), delta(1), epsilon(1). CF(0) has three main subunits: a(1), b(2) and c(9-12). The alpha and beta chains form an alternating ring which encloses part of the gamma chain. CF(1) is attached to CF(0) by a central stalk formed by the gamma and epsilon chains, while a peripheral stalk is formed by the delta and b chains.

Its subcellular location is the cell membrane. The enzyme catalyses ATP + H2O + 4 H(+)(in) = ADP + phosphate + 5 H(+)(out). Functionally, produces ATP from ADP in the presence of a proton gradient across the membrane. The alpha chain is a regulatory subunit. This Clostridium botulinum (strain Eklund 17B / Type B) protein is ATP synthase subunit alpha.